The following is a 311-amino-acid chain: MKRVHVIDSHTAGEPTRLVMEGMPALSGRTIAEKCDDFRDNHDAWRRAIMLEPRGHDVLVGALYCAPESSDASCGVIFFNNSGYLGMCGHGTIGLVASLHHLGQLTPGCHKIDTPAGPVSATLHDDGAVTVRNVLSYRHRRRVPVEVPGYGTVHGDIAWGGNWFFLVSDHDMTLELDNVEALTDYTWAIRQALEAQSITGENGGVIDHIELFCDDREADSRNFVLCPGKAYDRSPCGTGTSAKLACLAADGKLAPGQVWTQASICGSRFEAFYEREGDGIRPSIKGRAYLSADATLLIDERDPFAWGIASP.

Cysteine 88 (proton acceptor) is an active-site residue. Residues 89-90, histidine 208, and aspartate 232 each bind substrate; that span reads GH. Cysteine 236 (proton donor) is an active-site residue. Residue 237-238 coordinates substrate; that stretch reads GT.

The protein belongs to the proline racemase family.

The enzyme catalyses trans-4-hydroxy-L-proline = cis-4-hydroxy-D-proline. Functionally, catalyzes the epimerization of trans-4-hydroxy-L-proline (t4LHyp) to cis-4-hydroxy-D-proline (c4DHyp). Is likely involved in a degradation pathway that converts t4LHyp to alpha-ketoglutarate. Displays no proline racemase activity. The protein is 4-hydroxyproline 2-epimerase of Chromohalobacter salexigens (strain ATCC BAA-138 / DSM 3043 / CIP 106854 / NCIMB 13768 / 1H11).